Consider the following 61-residue polypeptide: MNPIILKKDGKLAEITLNRPEVHNMFSMATLTRGFAEKVVTMLEKRRRNSTEIKFLCRHAF.

This is an uncharacterized protein from Archaeoglobus fulgidus (strain ATCC 49558 / DSM 4304 / JCM 9628 / NBRC 100126 / VC-16).